Reading from the N-terminus, the 393-residue chain is MSSALANIYARLPVSFTHGRGVWLWDTGERRYLDALAGIGVSCLGHGHPGLVAAISEQAARLIHTSNIYEVPQQAALARRLAELSGMSEVLFSNSGSEANEAAIKLARYYGYKQGNTHAHIITMDSSWHGRTLATLAATGSDKARQGFGPMPSGFIQVPYNDLPAIRAAGEAEPRVTAVLLEVLQGEGGIRPSDMAFLRGVRQLCTERGWLLMIDEVQSGIGRTGKWFAHQWADIRPDVMTLAKGLAGGVPIGAMLAAGPAAGVFAPGSHGTTFGGGPLACAAGLAVIDAIEQEGLLANAHEVGAHLHAALASELAGVPGIIEVRGRGLMLGIELDRPCGILATRAMEAGLLINVTRERVVRLLPPLILSGEEADQIVRILVPLIKQFLAQQQ.

R131 is a binding site for N(2)-acetyl-L-ornithine. D215–Q218 provides a ligand contact to pyridoxal 5'-phosphate. Residue K244 is modified to N6-(pyridoxal phosphate)lysine. T272 contributes to the N(2)-acetyl-L-ornithine binding site. T273 contributes to the pyridoxal 5'-phosphate binding site.

This sequence belongs to the class-III pyridoxal-phosphate-dependent aminotransferase family. ArgD subfamily. As to quaternary structure, homodimer. Requires pyridoxal 5'-phosphate as cofactor.

The protein resides in the cytoplasm. It catalyses the reaction N(2)-acetyl-L-ornithine + 2-oxoglutarate = N-acetyl-L-glutamate 5-semialdehyde + L-glutamate. The protein operates within amino-acid biosynthesis; L-arginine biosynthesis; N(2)-acetyl-L-ornithine from L-glutamate: step 4/4. The chain is Acetylornithine aminotransferase 1 from Bordetella bronchiseptica (strain ATCC BAA-588 / NCTC 13252 / RB50) (Alcaligenes bronchisepticus).